We begin with the raw amino-acid sequence, 243 residues long: GrpE protein homolog, mitochondrial (243 aa).

Residues Lys-56 to Gln-79 are disordered.

This sequence belongs to the GrpE family. As to quaternary structure, component of the PAM complex, at least composed of mtHsp70, MGE1, TIM44, PAM16, PAM17 and PAM18.

It is found in the mitochondrion matrix. Its function is as follows. Essential component of the PAM complex, a complex required for the translocation of transit peptide-containing proteins from the inner membrane into the mitochondrial matrix in an ATP-dependent manner. Seems to control the nucleotide-dependent binding of SSC1 to substrate proteins. The protein is GrpE protein homolog, mitochondrial (mge1) of Kluyveromyces lactis (strain ATCC 8585 / CBS 2359 / DSM 70799 / NBRC 1267 / NRRL Y-1140 / WM37) (Yeast).